Reading from the N-terminus, the 826-residue chain is Zinc phosphodiesterase ELAC protein 2 (826 aa).

Residues 1 to 16 (MWALCSLLRSATGRTM) constitute a mitochondrion transit peptide. Positions 15 to 27 (TMSQGRTISQGSA) are enriched in polar residues. Disordered regions lie at residues 15–53 (TMSQGRTISQGSARRQRPPKDPLRHLRTREKRGPSGSSG) and 187–231 (SEQR…VSQR). Phosphoserine occurs at positions 199, 208, 212, 229, 618, and 736. The segment covering 208-224 (SPERSSDSESNESEPHL) has biased composition (basic and acidic residues). The disordered stretch occupies residues 798–826 (ALTDDLEDGEPQQKRAHTEEPQSKKVRAQ). Positions 808-820 (PQQKRAHTEEPQS) are enriched in basic and acidic residues.

Belongs to the RNase Z family. In terms of assembly, homodimer. Interacts with PTCD1. Zn(2+) is required as a cofactor.

The protein localises to the mitochondrion. It is found in the mitochondrion matrix. It localises to the mitochondrion nucleoid. The protein resides in the nucleus. It carries out the reaction Endonucleolytic cleavage of RNA, removing extra 3' nucleotides from tRNA precursor, generating 3' termini of tRNAs. A 3'-hydroxy group is left at the tRNA terminus and a 5'-phosphoryl group is left at the trailer molecule.. Zinc phosphodiesterase, which displays mitochondrial tRNA 3'-processing endonuclease activity. Involved in tRNA maturation, by removing a 3'-trailer from precursor tRNA. Associates with mitochondrial DNA complexes at the nucleoids to initiate RNA processing and ribosome assembly. This Macaca fascicularis (Crab-eating macaque) protein is Zinc phosphodiesterase ELAC protein 2 (ELAC2).